The following is a 184-amino-acid chain: Ribosome-recycling factor (184 aa).

The protein belongs to the RRF family.

It localises to the cytoplasm. Its function is as follows. Responsible for the release of ribosomes from messenger RNA at the termination of protein biosynthesis. May increase the efficiency of translation by recycling ribosomes from one round of translation to another. The protein is Ribosome-recycling factor of Hyphomonas neptunium (strain ATCC 15444).